Here is a 110-residue protein sequence, read N- to C-terminus: Small ribosomal subunit protein bS16 (110 aa).

Residues 81 to 104 are compositionally biased toward basic and acidic residues; that stretch reads VRPAEVLGKQKQEKERSAKKKDAT. A disordered region spans residues 81-110; it reads VRPAEVLGKQKQEKERSAKKKDATASETSE.

This sequence belongs to the bacterial ribosomal protein bS16 family.

This chain is Small ribosomal subunit protein bS16, found in Prochlorococcus marinus (strain NATL1A).